Reading from the N-terminus, the 346-residue chain is tRNA N6-adenosine threonylcarbamoyltransferase (346 aa).

Fe cation contacts are provided by His111 and His115. Residues 134 to 138 (LVSGG), Asp167, Gly180, and Asn279 contribute to the substrate site. Asp307 is a binding site for Fe cation.

This sequence belongs to the KAE1 / TsaD family. The cofactor is Fe(2+).

The protein localises to the cytoplasm. The enzyme catalyses L-threonylcarbamoyladenylate + adenosine(37) in tRNA = N(6)-L-threonylcarbamoyladenosine(37) in tRNA + AMP + H(+). In terms of biological role, required for the formation of a threonylcarbamoyl group on adenosine at position 37 (t(6)A37) in tRNAs that read codons beginning with adenine. Is involved in the transfer of the threonylcarbamoyl moiety of threonylcarbamoyl-AMP (TC-AMP) to the N6 group of A37, together with TsaE and TsaB. TsaD likely plays a direct catalytic role in this reaction. This chain is tRNA N6-adenosine threonylcarbamoyltransferase, found in Burkholderia pseudomallei (strain 1106a).